A 315-amino-acid polypeptide reads, in one-letter code: Ribosomal RNA small subunit methyltransferase H (315 aa).

S-adenosyl-L-methionine-binding positions include 37–39 (GGH), D57, F83, D105, and Q112.

It belongs to the methyltransferase superfamily. RsmH family.

The protein resides in the cytoplasm. It catalyses the reaction cytidine(1402) in 16S rRNA + S-adenosyl-L-methionine = N(4)-methylcytidine(1402) in 16S rRNA + S-adenosyl-L-homocysteine + H(+). Its function is as follows. Specifically methylates the N4 position of cytidine in position 1402 (C1402) of 16S rRNA. This chain is Ribosomal RNA small subunit methyltransferase H, found in Pseudomonas fluorescens (strain Pf0-1).